The chain runs to 162 residues: Ribosome maturation factor RimP (162 aa).

It belongs to the RimP family.

The protein resides in the cytoplasm. Its function is as follows. Required for maturation of 30S ribosomal subunits. This is Ribosome maturation factor RimP from Beutenbergia cavernae (strain ATCC BAA-8 / DSM 12333 / CCUG 43141 / JCM 11478 / NBRC 16432 / NCIMB 13614 / HKI 0122).